Here is a 188-residue protein sequence, read N- to C-terminus: Large ribosomal subunit protein eL18 (188 aa).

Residue lysine 119 forms a Glycyl lysine isopeptide (Lys-Gly) (interchain with G-Cter in SUMO2) linkage. Serine 130 carries the post-translational modification Phosphoserine. Positions 151-188 (HFGKAPGTPHSHTKPYVRSKGRKFERARGRRASRGYKN) are disordered. The residue at position 158 (threonine 158) is a Phosphothreonine. Basic residues-rich tracts occupy residues 161 to 171 (SHTKPYVRSKG) and 178 to 188 (RGRRASRGYKN). Lysine 164 participates in a covalent cross-link: Glycyl lysine isopeptide (Lys-Gly) (interchain with G-Cter in SUMO2).

The protein belongs to the eukaryotic ribosomal protein eL18 family. As to quaternary structure, component of the large ribosomal subunit.

Its subcellular location is the cytoplasm. The protein localises to the cytosol. It localises to the rough endoplasmic reticulum. Component of the large ribosomal subunit. The ribosome is a large ribonucleoprotein complex responsible for the synthesis of proteins in the cell. In Canis lupus familiaris (Dog), this protein is Large ribosomal subunit protein eL18 (RPL18).